Consider the following 131-residue polypeptide: D-ribose pyranase (131 aa).

The active-site Proton donor is histidine 20. Residues aspartate 28, histidine 98, and tyrosine 120–asparagine 122 contribute to the substrate site.

Belongs to the RbsD / FucU family. RbsD subfamily. In terms of assembly, homodecamer.

The protein localises to the cytoplasm. The catalysed reaction is beta-D-ribopyranose = beta-D-ribofuranose. Its pathway is carbohydrate metabolism; D-ribose degradation; D-ribose 5-phosphate from beta-D-ribopyranose: step 1/2. Catalyzes the interconversion of beta-pyran and beta-furan forms of D-ribose. This chain is D-ribose pyranase, found in Bacillus cereus (strain ATCC 10987 / NRS 248).